We begin with the raw amino-acid sequence, 271 residues long: MKTSIASHLLEKVRAENPLVHNITNQVVTNFTANGLLALGASPVMANAKEEVAEMAQLADALVLNIGTLTKETVESMILAGQSANKKGIPVLLDPVGVGATTFRLKAAKQLLEQVNITVVRGNAAEIAHLLEVDGWESKGVDAKAANGDVSALVKQAAKTLQTVVVITGEVDVVSDGEDVLSIHNGHEWLTKVTGTGCLLTSVIGAFCAAGERPLHASAAALLFYGVAAEKAAQYTQNKGPGTFQMELLNALSHTTGNDVLTLGKIGRNVT.

Residue methionine 45 coordinates substrate. ATP is bound by residues arginine 121 and threonine 168. Glycine 195 is a binding site for substrate.

Belongs to the Thz kinase family. Mg(2+) serves as cofactor.

The catalysed reaction is 5-(2-hydroxyethyl)-4-methylthiazole + ATP = 4-methyl-5-(2-phosphooxyethyl)-thiazole + ADP + H(+). It participates in cofactor biosynthesis; thiamine diphosphate biosynthesis; 4-methyl-5-(2-phosphoethyl)-thiazole from 5-(2-hydroxyethyl)-4-methylthiazole: step 1/1. Catalyzes the phosphorylation of the hydroxyl group of 4-methyl-5-beta-hydroxyethylthiazole (THZ). This Bacillus pumilus (strain SAFR-032) protein is Hydroxyethylthiazole kinase.